A 325-amino-acid polypeptide reads, in one-letter code: Acetyl-coenzyme A carboxylase carboxyl transferase subunit alpha (325 aa).

Positions Arg-38–Ser-292 constitute a CoA carboxyltransferase C-terminal domain.

This sequence belongs to the AccA family. In terms of assembly, acetyl-CoA carboxylase is a heterohexamer composed of biotin carboxyl carrier protein (AccB), biotin carboxylase (AccC) and two subunits each of ACCase subunit alpha (AccA) and ACCase subunit beta (AccD).

It localises to the cytoplasm. The enzyme catalyses N(6)-carboxybiotinyl-L-lysyl-[protein] + acetyl-CoA = N(6)-biotinyl-L-lysyl-[protein] + malonyl-CoA. Its pathway is lipid metabolism; malonyl-CoA biosynthesis; malonyl-CoA from acetyl-CoA: step 1/1. Component of the acetyl coenzyme A carboxylase (ACC) complex. First, biotin carboxylase catalyzes the carboxylation of biotin on its carrier protein (BCCP) and then the CO(2) group is transferred by the carboxyltransferase to acetyl-CoA to form malonyl-CoA. The polypeptide is Acetyl-coenzyme A carboxylase carboxyl transferase subunit alpha (Bacillus velezensis (strain DSM 23117 / BGSC 10A6 / LMG 26770 / FZB42) (Bacillus amyloliquefaciens subsp. plantarum)).